A 284-amino-acid polypeptide reads, in one-letter code: Orotidine 5'-phosphate decarboxylase (284 aa).

The active-site Proton donor is the K95.

It belongs to the OMP decarboxylase family. Type 2 subfamily.

It catalyses the reaction orotidine 5'-phosphate + H(+) = UMP + CO2. It participates in pyrimidine metabolism; UMP biosynthesis via de novo pathway; UMP from orotate: step 2/2. This is Orotidine 5'-phosphate decarboxylase from Leptothrix cholodnii (strain ATCC 51168 / LMG 8142 / SP-6) (Leptothrix discophora (strain SP-6)).